Consider the following 278-residue polypeptide: Membrane protein insertase YidC 2 (278 aa).

The first 18 residues, 1–18 (MHKRLFITLLGFIILLAG), serve as a signal peptide directing secretion. Cys-19 carries N-palmitoyl cysteine lipidation. A lipid anchor (S-diacylglycerol cysteine) is attached at Cys-19. 4 consecutive transmembrane segments (helical) span residues 55 to 75 (GFAI…FMLI), 132 to 152 (MLGC…YMSL), 176 to 196 (LIMT…NSIH), and 224 to 244 (AAAL…QMHF).

It belongs to the OXA1/ALB3/YidC family. Type 2 subfamily.

It is found in the cell membrane. Required for the insertion and/or proper folding and/or complex formation of integral membrane proteins into the membrane. Involved in integration of membrane proteins that insert both dependently and independently of the Sec translocase complex, as well as at least some lipoproteins. The polypeptide is Membrane protein insertase YidC 2 (Staphylococcus epidermidis (strain ATCC 12228 / FDA PCI 1200)).